The primary structure comprises 149 residues: UPF0260 protein PSEEN4031 (149 aa).

This sequence belongs to the UPF0260 family.

The protein is UPF0260 protein PSEEN4031 of Pseudomonas entomophila (strain L48).